Consider the following 28-residue polypeptide: Seed allergenic protein 1 (28 aa).

Positions 1-28 (VTXEEGXYSISDQSKVGEQXIRSPDREM) are disordered.

In Prunus dulcis (Almond), this protein is Seed allergenic protein 1.